A 542-amino-acid chain; its full sequence is MLTLRSSSDTVRGFPATKRDMIRQPSAEDLDAAHQLVSSARGVADLRPDSFDASRSPDGDKASVDTGAAMDDTASSDQNHSESQQQQQQQQQQHSQASEQVSAPESSSRSRASPKASRNTEVFLGHQCVPTNRIRDSGANANSGYANSSTSDPRASPAASDASAQNASGCGSTPAGTCPGGGSCNGTGGAVGCDGCPAYNNRVYKAAPRAPSARQARASPSAQTSEEQAQSGLDALDSASQDASGMPKACQNCGTTLTPLWRRDDQGNTICNACGLYYRLHGSHRPVAMKKTVIKRRKRVVPALRDRSPGAGSSDNSSVSPELHSASLATSNADTNAYPPSENGGPSYGAAQFPHSAPPPIDFTGYYSKPTQSTSSPGLNTLINHSPNTKKRTHSESTSAESAPPATRIQSDISASAHLPPINPASARALPNSGRLSSISSLLNHTDPSFTESHVDAALGSNAPARSQTQTQPQPGTRSYSPNPVNPPTTQPAHGSHSIPPPPLTPAADDKVKAARRAQLQREAENMREALRAKERELASLK.

Residues 1 to 10 (MLTLRSSSDT) are compositionally biased toward polar residues. The interval 1 to 172 (MLTLRSSSDT…SAQNASGCGS (172 aa)) is disordered. Residues 44 to 63 (ADLRPDSFDASRSPDGDKAS) are compositionally biased toward basic and acidic residues. Low complexity-rich tracts occupy residues 75 to 117 (SSDQ…PKAS) and 148 to 168 (SSTS…QNAS). The cystein-rich region (CRR) stretch occupies residues 178-196 (CPGGGSCNGTGGAVGCDGC). Residues 210–223 (APSARQARASPSAQ) show a composition bias toward low complexity. Positions 210 to 248 (APSARQARASPSAQTSEEQAQSGLDALDSASQDASGMPK) are disordered. The segment at 250-274 (CQNCGTTLTPLWRRDDQGNTICNAC) adopts a GATA-type zinc-finger fold. Basic residues predominate over residues 289-300 (MKKTVIKRRKRV). Disordered stretches follow at residues 289–408 (MKKT…PATR) and 461–525 (SNAP…REAE). Polar residues-rich tracts occupy residues 311–320 (AGSSDNSSVS) and 369–387 (KPTQ…NHSP). The segment covering 396-407 (ESTSAESAPPAT) has biased composition (low complexity). Polar residues predominate over residues 464-483 (PARSQTQTQPQPGTRSYSPN). A coiled-coil region spans residues 510 to 542 (DKVKAARRAQLQREAENMREALRAKERELASLK).

The protein resides in the nucleus. Functionally, GATA-type transcription repressor that regulates iron acquisition genes through specific binding the GATA sequence elements of target promoters. SreA targets include genes encoding a number of key iron-regulated factors such as the siderophore biosynthesis genes. Is dispensable for growth on keratin substrates. SreA represses the expression of hapX and the siderophore system during iron sufficient conditions by an iron-sensing mechanism, while hapX represses sreA and activates the siderophore system during iron-limiting conditions resulting in efficient iron uptake and inhibition of iron-consuming pathways. The sequence is that of GATA-type transcription factor sreA from Arthroderma benhamiae (strain ATCC MYA-4681 / CBS 112371) (Trichophyton mentagrophytes).